A 506-amino-acid chain; its full sequence is Tetratricopeptide repeat protein 8 (506 aa).

A disordered region spans residues 83 to 112 (RPGTSFARPKTSAKGVNPILRPTTNAGRPL). TPR repeat units lie at residues 217 to 250 (YYWK…KKLI), 251 to 283 (ETFA…FPEN), 284 to 317 (VTML…ESNN), 319 to 351 (EAIA…GVSS), 353 to 385 (ELFL…MTDD), 388 to 421 (ADVW…DPDH), 423 to 455 (ESLV…NPYM), and 456 to 489 (FEGN…FPEH).

In terms of assembly, part of BBSome complex, that contains at least bbs-1, bbs-2, bbs-4, bbs-5, osm-12, bbs-8/ttc-8 and bbs-9. In terms of tissue distribution, expressed in head and tail neurons. Expressed in ciliated male tail-neurons. Expressed in thermosensory and CO(2) sensory AFD neurons.

The protein localises to the cell projection. The protein resides in the cilium. Its subcellular location is the cytoplasm. It localises to the cytoskeleton. It is found in the cilium basal body. The protein localises to the cilium axoneme. Functionally, component of the BBSome complex. The BBSome complex is thought to function as a coat complex required for sorting of specific membrane proteins to the primary cilia. The BBSome complex is required for ciliogenesis but is dispensable for centriolar satellite function. Required for proper BBSome complex assembly and its ciliary localization. Required for cilia biogenesis and both the assembly and movement of intraflagellar transport proteins along the ciliary axoneme. Plays a role in guanylyl cyclase localization in the ring-like structures at the base of the finger compartment in AFD sensory neurons. This chain is Tetratricopeptide repeat protein 8, found in Caenorhabditis elegans.